The chain runs to 706 residues: Parasporal crystal protein Cry18Aa (706 aa).

It belongs to the delta endotoxin family.

Binds to the brush border membrane vesicles of scarab larvae and somehow damages the gut wall to allow the vegetative cells of P.popilliae to enter the hemolymph. Active on M.melolontha. This chain is Parasporal crystal protein Cry18Aa (cry18Aa), found in Paenibacillus popilliae (Bacillus popilliae).